Here is a 254-residue protein sequence, read N- to C-terminus: L-arabinose 1-dehydrogenase (NAD(P)(+)) (254 aa).

The active-site Proton acceptor is the Y142. Residues Y142 and K146 each contribute to the NAD(+) site.

The protein belongs to the NAD(P)-dependent epimerase/dehydratase family. As to quaternary structure, homotetramer.

The enzyme catalyses alpha-L-arabinopyanose + NAD(+) = L-arabinono-1,4-lactone + NADH + H(+). The catalysed reaction is alpha-L-arabinopyanose + NADP(+) = L-arabinono-1,4-lactone + NADPH + H(+). It functions in the pathway carbohydrate degradation; L-arabinose degradation via L-arabinono-1,4-lactone pathway. Functionally, L-AraDH initiates the degradation of L-arabinose. Catalyzes the NAD(P)(+)-dependent conversion of L-arabinose to L-arabino-gamma-lactone. It is highly specific for L-arabinose as substrate and can use both NADP(+) and NAD(+) as electron acceptor, with a slight preference for NADP(+). This Haloferax volcanii (strain ATCC 29605 / DSM 3757 / JCM 8879 / NBRC 14742 / NCIMB 2012 / VKM B-1768 / DS2) (Halobacterium volcanii) protein is L-arabinose 1-dehydrogenase (NAD(P)(+)).